The chain runs to 369 residues: MIDFELKQKIDEAKKKFEDIIKVFHPENKRKELEELEKQMGDSDFWSDQRKAREISQKAQRIRKIIDDMKDIEAKFEDLDAAIELSDEDQSFVETIKEMVEEIEKKVKTFELELILNGKFDASNAYLTIHPGAGGTESQDWASMLLRMYMRWAERKGFDVQIVDYQPGEEAGIKSAMIYIKGDYAYGYLKYERGVHRLVRISPFDANKRRHTSFASVNVIPEIDDDIDIEINPEDLRIDTYRASGAGGQYVNKTESAVRITHIPTGIVVTCQTERSQLQNKETALKVLKARLYQLELEKRQKQLEEIQGELKDISWGNQIRSYVFQPYTMVKDHRTNVETGNIDAVMDGEIDIFIESELIHFAGIRNKQ.

Gln-249 bears the N5-methylglutamine mark.

Belongs to the prokaryotic/mitochondrial release factor family. Methylated by PrmC. Methylation increases the termination efficiency of RF2.

The protein resides in the cytoplasm. In terms of biological role, peptide chain release factor 2 directs the termination of translation in response to the peptide chain termination codons UGA and UAA. This chain is Peptide chain release factor 2, found in Thermosipho africanus (strain TCF52B).